A 298-amino-acid chain; its full sequence is MESENIISAADKARILAEALPYIRRFSGSVAVIKYGGNAMTEPALKEGFARDVVLLKLVGIHPVIVHGGGPQINAMLEKVGKKGEFVQGMRVTDKEAMDIVEMVLGGHVNKEIVSMINTYGGHAVGVSGRDDHFIKAKKLLIDTPEQNGVDIGQVGTVESIDTGLVKGLIERGYIPVVAPVGVGEKGEAFNINADLVAGKLAEELNAEKLLMMTNIAGVMDKMGNLLTKLTPKRIDELIADGTLYGGMLPKIASAVEAAVNGVKATHIIDGRLPNALLLEIFTDAGIGSMILGGGEDA.

Substrate-binding positions include 69 to 70, Arg-91, and Asn-191; that span reads GG.

This sequence belongs to the acetylglutamate kinase family. ArgB subfamily.

The protein localises to the cytoplasm. The catalysed reaction is N-acetyl-L-glutamate + ATP = N-acetyl-L-glutamyl 5-phosphate + ADP. Its pathway is amino-acid biosynthesis; L-arginine biosynthesis; N(2)-acetyl-L-ornithine from L-glutamate: step 2/4. Functionally, catalyzes the ATP-dependent phosphorylation of N-acetyl-L-glutamate. The protein is Acetylglutamate kinase of Neisseria meningitidis serogroup C / serotype 2a (strain ATCC 700532 / DSM 15464 / FAM18).